The primary structure comprises 419 residues: NFATC2-interacting protein (419 aa).

2 disordered regions span residues 1 to 131 (MAEP…GKVK) and 151 to 215 (DEEE…HTRA). A compositionally biased stretch (gly residues) spans 11–27 (WSGGSGAGRGGRGGWGG). A compositionally biased stretch (low complexity) spans 35-51 (QRSPSRGTLDVVSVDLV). Phosphoserine is present on residues Ser-54, Ser-84, Ser-88, Ser-90, Ser-92, and Ser-127. Residues Lys-129 and Lys-131 each participate in a glycyl lysine isopeptide (Lys-Gly) (interchain with G-Cter in SUMO2) cross-link. Residues 180-192 (RTKDKEEKKKTEF) are compositionally biased toward basic and acidic residues. Ser-198, Ser-201, Ser-204, Ser-220, and Ser-314 each carry phosphoserine. Residues 209–231 (SRTHTRALKKLSEVNKRLQDLRS) adopt a coiled-coil conformation. Residues Thr-316 and Thr-318 each carry the phosphothreonine modification. In terms of domain architecture, Ubiquitin-like spans 348–419 (LQLRVQGKEK…ESGDLIEVWG (72 aa)). Ser-369 and Ser-390 each carry phosphoserine.

Interacts with NFATC2, TRAF1, TRAF2 and PRMT1. Interacts with UBE2I/UBC9. In terms of processing, methylation at the N-terminus by PRMT1 modulates interaction with the NFAT complex and results in augmented cytokine production.

The protein resides in the nucleus. It is found in the cytoplasm. In T-helper 2 (Th2) cells, regulates the magnitude of NFAT-driven transcription of a specific subset of cytokine genes, including IL3, IL4, IL5 and IL13, but not IL2. Recruits PRMT1 to the IL4 promoter; this leads to enhancement of histone H4 'Arg-3'-methylation and facilitates subsequent histone acetylation at the IL4 locus, thus promotes robust cytokine expression. Down-regulates formation of poly-SUMO chains by UBE2I/UBC9. In Homo sapiens (Human), this protein is NFATC2-interacting protein (NFATC2IP).